A 78-amino-acid chain; its full sequence is uncharacterized protein (78 aa).

2 helical membrane-spanning segments follow: residues 12 to 32 (LVSV…ICVV) and 51 to 71 (GVGA…VAVH).

Its subcellular location is the cell membrane. This is an uncharacterized protein from Treponema pallidum (strain Nichols).